Here is a 669-residue protein sequence, read N- to C-terminus: Methionine--tRNA ligase (669 aa).

A 'HIGH' region motif is present at residues proline 15–histidine 25. Residues cysteine 146, cysteine 149, cysteine 158, and cysteine 162 each coordinate Zn(2+). The short motif at lysine 328–serine 332 is the 'KMSKS' region element. ATP is bound at residue lysine 331. One can recognise a tRNA-binding domain in the interval glutamine 570 to arginine 669.

It belongs to the class-I aminoacyl-tRNA synthetase family. MetG type 1 subfamily. In terms of assembly, homodimer. Requires Zn(2+) as cofactor.

The protein localises to the cytoplasm. The catalysed reaction is tRNA(Met) + L-methionine + ATP = L-methionyl-tRNA(Met) + AMP + diphosphate. In terms of biological role, is required not only for elongation of protein synthesis but also for the initiation of all mRNA translation through initiator tRNA(fMet) aminoacylation. The protein is Methionine--tRNA ligase of Methanothrix thermoacetophila (strain DSM 6194 / JCM 14653 / NBRC 101360 / PT) (Methanosaeta thermophila).